Here is a 367-residue protein sequence, read N- to C-terminus: Putrescine-binding periplasmic protein SpuD (367 aa).

Residues Met-1–Ala-24 form the signal peptide. Residue Ser-36–Asp-37 participates in putrescine binding. A disulfide bond links Cys-173 and Cys-236. Residues Asp-244 and Asp-275 each coordinate putrescine.

This sequence belongs to the bacterial solute-binding protein PotD/PotF family.

Its subcellular location is the periplasm. It is found in the secreted. Functionally, putrescine-binding protein probably required for putrescine uptake into cells. Binds putrescine with high affinity, spermidine with relatively low affinity. Does not bind cadaverine or spermine. Putrescine binding induces large inter-domain conformational changes. The sequence is that of Putrescine-binding periplasmic protein SpuD (spuD) from Pseudomonas aeruginosa (strain UCBPP-PA14).